The following is an 84-amino-acid chain: Large ribosomal subunit protein bL31B (84 aa).

It belongs to the bacterial ribosomal protein bL31 family. Type B subfamily. As to quaternary structure, part of the 50S ribosomal subunit.

In Bacteroides thetaiotaomicron (strain ATCC 29148 / DSM 2079 / JCM 5827 / CCUG 10774 / NCTC 10582 / VPI-5482 / E50), this protein is Large ribosomal subunit protein bL31B.